The chain runs to 1010 residues: Eukaryotic translation initiation factor 4E transporter (1010 aa).

A YXXXXLphi motif motif is present at residues 10–16 (YSKVDLL). 5 disordered regions span residues 154-182 (GSNS…RKGS), 196-277 (PDHD…RLVE), 289-320 (YDSK…SKRG), 354-391 (NEER…SNDS), and 921-960 (QSNP…ERIS). The segment covering 201 to 211 (CMSSSPTFSTS) has biased composition (polar residues). The span at 227-247 (DNWDYKNEKTVEASIENEKET) shows a compositional bias: basic and acidic residues. The segment covering 248–263 (SPNGSGSTSSLNQHNQ) has biased composition (polar residues). Composition is skewed to basic and acidic residues over residues 354 to 364 (NEERSVTEDKN) and 372 to 384 (KNLD…DEAS). Positions 934–953 (SDSSDSGNVIKANSLTSPSY) are enriched in polar residues.

This sequence belongs to the 4E-T/EIF4E-T family. As to quaternary structure, interacts (via YXXXXLphi motif) with eIF4E1. Interacts with DDX6/me31B. As to expression, expressed in all larval and adult organs and tissues, with highest levels in the ovary.

Its subcellular location is the cytoplasm. It localises to the P-body. The protein resides in the nucleus. EIF4E1-binding protein that regulates translation and stability of mRNAs in processing bodies (P-bodies). Probably plays a role in P-bodies to coordinate the storage of translationally inactive mRNAs in the cytoplasm and prevent their degradation. Acts as a binding platform for multiple RNA-binding proteins. Required for the formation of P-bodies. The sequence is that of Eukaryotic translation initiation factor 4E transporter from Drosophila melanogaster (Fruit fly).